The sequence spans 131 residues: Leptin receptor overlapping transcript-like 1 (131 aa).

The next 4 membrane-spanning stretches (helical) occupy residues 7–27 (LISLSFGGAIGLMFLMLGCAL), 32–52 (KYWPLFVLFFYILSPIPYCIA), 69–89 (LAIFLTTGIVVSAFGLPIVFA), and 100–120 (ALVLTGNTVIFATILGFFLVF).

Belongs to the OB-RGRP/VPS55 family. As to quaternary structure, interacts with RAB13. Widely expressed, with highest expression in heart, testis, adrenal gland, thymus, and spleen, and lowest expression in lung and skeletal muscle.

The protein localises to the membrane. Negatively regulates growth hormone (GH) receptor cell surface expression in liver. May play a role in liver resistance to GH during periods of reduced nutrient availability. This is Leptin receptor overlapping transcript-like 1 (LEPROTL1) from Homo sapiens (Human).